The sequence spans 375 residues: Alanine racemase, catabolic (375 aa).

Lys-38 (proton acceptor; specific for D-alanine) is an active-site residue. At Lys-38 the chain carries N6-(pyridoxal phosphate)lysine. Tyr-269 acts as the Proton acceptor; specific for L-alanine in catalysis.

The protein belongs to the alanine racemase family. It depends on pyridoxal 5'-phosphate as a cofactor.

It carries out the reaction L-alanine = D-alanine. The protein operates within amino-acid biosynthesis; D-alanine biosynthesis; D-alanine from L-alanine: step 1/1. In Schizosaccharomyces pombe (strain 972 / ATCC 24843) (Fission yeast), this protein is Alanine racemase, catabolic (alr1).